The chain runs to 411 residues: Metacaspase-1B (411 aa).

Residues 1–97 (MYHRHSAPPP…PPLEAQQFGN (97 aa)) are disordered. The segment covering 7 to 65 (APPPPGRSRGYPPPQQQWPPQPYQYLPYPPQGPPPAHTFPPPAHRSYPSPYPTPPPHSP) has biased composition (pro residues). Active-site residues include histidine 198 and cysteine 254.

This sequence belongs to the peptidase C14B family.

Functionally, involved in cell death (apoptosis). The polypeptide is Metacaspase-1B (casB) (Neosartorya fischeri (strain ATCC 1020 / DSM 3700 / CBS 544.65 / FGSC A1164 / JCM 1740 / NRRL 181 / WB 181) (Aspergillus fischerianus)).